Here is a 116-residue protein sequence, read N- to C-terminus: Large ribosomal subunit protein bL19 (116 aa).

The protein belongs to the bacterial ribosomal protein bL19 family.

In terms of biological role, this protein is located at the 30S-50S ribosomal subunit interface and may play a role in the structure and function of the aminoacyl-tRNA binding site. The protein is Large ribosomal subunit protein bL19 of Clostridium botulinum (strain Eklund 17B / Type B).